Here is a 305-residue protein sequence, read N- to C-terminus: Taste receptor type 2 member 13 (305 aa).

At 1 to 7 (MGSNVYG) the chain is on the extracellular side. A helical transmembrane segment spans residues 8 to 28 (ILTMVMIAEFVFGNMSNGFIV). Over 29 to 43 (LINCIDWVRKGTLSS) the chain is Cytoplasmic. The helical transmembrane segment at 44–64 (IGWILLFLAISRMVLIWEMLI) threads the bilayer. Residues 65–88 (TWIKYMKYSFSFVTGTELRGIMFT) lie on the Extracellular side of the membrane. The chain crosses the membrane as a helical span at residues 89–109 (WVISNHFSLWLATILSIFYLL). The Cytoplasmic portion of the chain corresponds to 110–128 (KIASFSKPVFLYLKWREKK). Residues 129–149 (VLLIVLLGNLIFLMLNILQIN) traverse the membrane as a helical segment. Residues 150-182 (KHIEHWMYQYERNITWSSRVSDFAGFSNLVLLE) are Extracellular-facing. The N-linked (GlcNAc...) asparagine glycan is linked to N162. Residues 183–203 (MIVFSVTPFTVALVSFILLIF) traverse the membrane as a helical segment. Topologically, residues 204–232 (SLWKHLQKMHLNSRGERDPSTKAHVNALR) are cytoplasmic. A helical membrane pass occupies residues 233–253 (IMVSFLLLYATYFISFFLSLI). At 254 to 262 (PMAHKTRLG) the chain is on the extracellular side. A helical transmembrane segment spans residues 263-283 (LMFSITVGLFYPSSHSFILIL). Over 284-305 (GHSNLRQASLWVMTYLKCGQKH) the chain is Cytoplasmic.

The protein belongs to the G-protein coupled receptor T2R family.

The protein resides in the cell membrane. Its function is as follows. Receptor that may play a role in the perception of bitterness and is gustducin-linked. May play a role in sensing the chemical composition of the gastrointestinal content. The activity of this receptor may stimulate alpha gustducin, mediate PLC-beta-2 activation and lead to the gating of TRPM5. The sequence is that of Taste receptor type 2 member 13 from Mus musculus (Mouse).